The sequence spans 398 residues: Acetate kinase 1 (398 aa).

Residue Asn-9 coordinates Mg(2+). Lys-16 contributes to the ATP binding site. Arg-89 serves as a coordination point for substrate. The Proton donor/acceptor role is filled by Asp-146. Residues 206–210 (HLGNG), 281–283 (DCR), and 329–333 (GIGEN) contribute to the ATP site. Residue Glu-384 coordinates Mg(2+).

The protein belongs to the acetokinase family. Homodimer. It depends on Mg(2+) as a cofactor. Requires Mn(2+) as cofactor.

The protein localises to the cytoplasm. The enzyme catalyses acetate + ATP = acetyl phosphate + ADP. It functions in the pathway metabolic intermediate biosynthesis; acetyl-CoA biosynthesis; acetyl-CoA from acetate: step 1/2. Catalyzes the formation of acetyl phosphate from acetate and ATP. Can also catalyze the reverse reaction. In Vibrio cholerae serotype O1 (strain ATCC 39315 / El Tor Inaba N16961), this protein is Acetate kinase 1.